We begin with the raw amino-acid sequence, 577 residues long: Vacuolar protein sorting-associated protein 45 (577 aa).

The protein belongs to the STXBP/unc-18/SEC1 family. In terms of assembly, interacts with PEP7 and TLG2.

It is found in the cytoplasm. The protein resides in the vacuole membrane. Its function is as follows. Essential for vacuolar protein sorting. Function in membrane traffic between the Golgi and the vacuole. The polypeptide is Vacuolar protein sorting-associated protein 45 (VPS45) (Saccharomyces cerevisiae (strain ATCC 204508 / S288c) (Baker's yeast)).